A 215-amino-acid polypeptide reads, in one-letter code: MKLLGEKFPSMEVMTTHGVKRLPEDYAGKWFVLFSHPADFTPVCTTEFVEFARKAEEFKQLNTELIGLSVDQVFSHIKWVEWIKDNTGVQIPFPVIADELGRVSNQLGMIHPGKGTNTVRAVFIVDDKGVIRLIMYYPQEVGRNVDEILRALKALQTADQYGVALPEKWPNNYLIKDHVIVPPSTDEASANERKEKIKAKEIEAFDWWFVHKPLK.

Positions 2–157 (KLLGEKFPSM…ILRALKALQT (156 aa)) constitute a Thioredoxin domain. Cysteine 44 serves as the catalytic Cysteine sulfenic acid (-SOH) intermediate. Residue arginine 120 coordinates substrate.

Belongs to the peroxiredoxin family. Prx6 subfamily. As to quaternary structure, homodecamer. Pentamer of dimers that assemble into a ring structure.

Its subcellular location is the cytoplasm. It carries out the reaction a hydroperoxide + [thioredoxin]-dithiol = an alcohol + [thioredoxin]-disulfide + H2O. Functionally, thiol-specific peroxidase that catalyzes the reduction of hydrogen peroxide and organic hydroperoxides to water and alcohols, respectively. Plays a role in cell protection against oxidative stress by detoxifying peroxides. This chain is Peroxiredoxin 1, found in Caldanaerobacter subterraneus subsp. tengcongensis (strain DSM 15242 / JCM 11007 / NBRC 100824 / MB4) (Thermoanaerobacter tengcongensis).